A 156-amino-acid chain; its full sequence is Protein-export protein SecB (156 aa).

Belongs to the SecB family. In terms of assembly, homotetramer, a dimer of dimers. One homotetramer interacts with 1 SecA dimer.

The protein resides in the cytoplasm. Its function is as follows. One of the proteins required for the normal export of preproteins out of the cell cytoplasm. It is a molecular chaperone that binds to a subset of precursor proteins, maintaining them in a translocation-competent state. It also specifically binds to its receptor SecA. In Serratia proteamaculans (strain 568), this protein is Protein-export protein SecB.